Here is a 1551-residue protein sequence, read N- to C-terminus: UDP-glucose:glycoprotein glucosyltransferase 1 (1551 aa).

A signal peptide spans 1 to 42; it reads MCSRGDANAAGAAAARRVTGLCYNMGLLIALALLCLFSLAEA. N-linked (GlcNAc...) asparagine glycosylation is found at Asn-269, Asn-536, Asn-1015, and Asn-1228. The interval 1244–1551 is glucosyltransferase; it reads KTEEVKQDKD…QEGSQKHEEL (308 aa). At Ser-1277 the chain carries Phosphoserine. Residues 1531–1551 are disordered; the sequence is KELGTLHEEETQEGSQKHEEL. Residues 1548–1551 carry the Prevents secretion from ER motif; the sequence is HEEL.

It belongs to the glycosyltransferase 8 family. In terms of assembly, monomer as well as in a tight complex with SELENOF. Interacts with METTL23. Part of a large chaperone multiprotein complex comprising DNAJB11, HSP90B1, HSPA5, HYOU, PDIA2, PDIA4, PDIA6, PPIB, SDF2L1, UGGT1 and very small amounts of ERP29, but not, or at very low levels, CALR nor CANX. The cofactor is Ca(2+).

It is found in the endoplasmic reticulum lumen. The protein localises to the endoplasmic reticulum-Golgi intermediate compartment. The enzyme catalyses N(4)-(alpha-D-Man-(1-&gt;2)-alpha-D-Man-(1-&gt;2)-alpha-D-Man-(1-&gt;3)-[alpha-D-Man-(1-&gt;2)-alpha-D-Man-(1-&gt;3)-[alpha-D-Man-(1-&gt;2)-alpha-D-Man-(1-&gt;6)]-alpha-D-Man-(1-&gt;6)]-beta-D-Man-(1-&gt;4)-beta-D-GlcNAc-(1-&gt;4)-beta-D-GlcNAc)-L-asparaginyl-[protein] (N-glucan mannose isomer 9A1,2,3B1,2,3) + UDP-alpha-D-glucose = N(4)-(alpha-D-Glc-(1-&gt;3)-alpha-D-Man-(1-&gt;2)-alpha-D-Man-(1-&gt;2)-alpha-D-Man-(1-&gt;3)-[alpha-D-Man-(1-&gt;2)-alpha-D-Man-(1-&gt;3)-[alpha-D-Man-(1-&gt;2)-alpha-D-Man-(1-&gt;6)]-alpha-D-Man-(1-&gt;6)]-beta-D-Man-(1-&gt;4)-beta-D-GlcNAc-(1-&gt;4)-beta-D-GlcNAc)-L-asparaginyl-[protein] + UDP + H(+). Its pathway is protein modification; protein glycosylation. Functionally, recognizes glycoproteins with minor folding defects. Reglucosylates single N-glycans near the misfolded part of the protein, thus providing quality control for protein folding in the endoplasmic reticulum. Reglucosylated proteins are recognized by calreticulin for recycling to the endoplasmic reticulum and refolding or degradation. In Rattus norvegicus (Rat), this protein is UDP-glucose:glycoprotein glucosyltransferase 1 (Uggt1).